A 332-amino-acid polypeptide reads, in one-letter code: Methylthioribose-1-phosphate isomerase (332 aa).

Residues 44–46 (RGA), Arg87, and Gln192 contribute to the substrate site. The Proton donor role is filled by Asp233. 243–244 (NK) provides a ligand contact to substrate.

It belongs to the eIF-2B alpha/beta/delta subunits family. MtnA subfamily.

The enzyme catalyses 5-(methylsulfanyl)-alpha-D-ribose 1-phosphate = 5-(methylsulfanyl)-D-ribulose 1-phosphate. It functions in the pathway amino-acid biosynthesis; L-methionine biosynthesis via salvage pathway; L-methionine from S-methyl-5-thio-alpha-D-ribose 1-phosphate: step 1/6. Its function is as follows. Catalyzes the interconversion of methylthioribose-1-phosphate (MTR-1-P) into methylthioribulose-1-phosphate (MTRu-1-P). This is Methylthioribose-1-phosphate isomerase from Dehalococcoides mccartyi (strain ATCC BAA-2100 / JCM 16839 / KCTC 5957 / BAV1).